Consider the following 292-residue polypeptide: Elongation factor Ts (292 aa).

An involved in Mg(2+) ion dislocation from EF-Tu region spans residues 80–83 (TDFV).

This sequence belongs to the EF-Ts family.

It is found in the cytoplasm. Functionally, associates with the EF-Tu.GDP complex and induces the exchange of GDP to GTP. It remains bound to the aminoacyl-tRNA.EF-Tu.GTP complex up to the GTP hydrolysis stage on the ribosome. The protein is Elongation factor Ts of Mycoplasmopsis synoviae (strain 53) (Mycoplasma synoviae).